A 148-amino-acid chain; its full sequence is [Ribosomal protein bS18]-alanine N-acetyltransferase (148 aa).

The N-acetyltransferase domain maps to 2–147; the sequence is NTISSLETTD…DAIIMALPIS (146 aa). 69-71 provides a ligand contact to acetyl-CoA; it reads IAV. E103 acts as the Proton acceptor in catalysis. Acetyl-CoA is bound at residue N108. Residue Y115 is the Proton donor of the active site.

It belongs to the acetyltransferase family. RimI subfamily.

It localises to the cytoplasm. It catalyses the reaction N-terminal L-alanyl-[ribosomal protein bS18] + acetyl-CoA = N-terminal N(alpha)-acetyl-L-alanyl-[ribosomal protein bS18] + CoA + H(+). Its function is as follows. Acetylates the N-terminal alanine of ribosomal protein bS18. The sequence is that of [Ribosomal protein bS18]-alanine N-acetyltransferase from Escherichia coli O157:H7.